We begin with the raw amino-acid sequence, 78 residues long: Beta-defensin 135 (78 aa).

Residues 1-24 (MATRSVLLALVVLNLLFYVPPGRS) form the signal peptide. Disulfide bonds link Cys-37–Cys-64 and Cys-48–Cys-66.

Belongs to the beta-defensin family.

It localises to the secreted. Its function is as follows. Has antibacterial activity. This Pan troglodytes (Chimpanzee) protein is Beta-defensin 135 (DEFB135).